A 341-amino-acid chain; its full sequence is UDP-3-O-acylglucosamine N-acyltransferase (341 aa).

Catalysis depends on histidine 239, which acts as the Proton acceptor.

This sequence belongs to the transferase hexapeptide repeat family. LpxD subfamily. Homotrimer.

It carries out the reaction a UDP-3-O-[(3R)-3-hydroxyacyl]-alpha-D-glucosamine + a (3R)-hydroxyacyl-[ACP] = a UDP-2-N,3-O-bis[(3R)-3-hydroxyacyl]-alpha-D-glucosamine + holo-[ACP] + H(+). Its pathway is bacterial outer membrane biogenesis; LPS lipid A biosynthesis. In terms of biological role, catalyzes the N-acylation of UDP-3-O-acylglucosamine using 3-hydroxyacyl-ACP as the acyl donor. Is involved in the biosynthesis of lipid A, a phosphorylated glycolipid that anchors the lipopolysaccharide to the outer membrane of the cell. The sequence is that of UDP-3-O-acylglucosamine N-acyltransferase from Idiomarina loihiensis (strain ATCC BAA-735 / DSM 15497 / L2-TR).